We begin with the raw amino-acid sequence, 354 residues long: Uroporphyrinogen decarboxylase (354 aa).

Substrate is bound by residues 27-31, D77, Y154, T209, and H327; that span reads RQAGR.

The protein belongs to the uroporphyrinogen decarboxylase family. As to quaternary structure, homodimer.

It is found in the cytoplasm. It catalyses the reaction uroporphyrinogen III + 4 H(+) = coproporphyrinogen III + 4 CO2. It functions in the pathway porphyrin-containing compound metabolism; protoporphyrin-IX biosynthesis; coproporphyrinogen-III from 5-aminolevulinate: step 4/4. In terms of biological role, catalyzes the decarboxylation of four acetate groups of uroporphyrinogen-III to yield coproporphyrinogen-III. This Citrobacter koseri (strain ATCC BAA-895 / CDC 4225-83 / SGSC4696) protein is Uroporphyrinogen decarboxylase.